The primary structure comprises 145 residues: Ribosome-binding factor A (145 aa).

A disordered region spans residues 126 to 145 (RDLDTETDAEAGSETTKEED). A compositionally biased stretch (acidic residues) spans 130–145 (TETDAEAGSETTKEED).

The protein belongs to the RbfA family. Monomer. Binds 30S ribosomal subunits, but not 50S ribosomal subunits or 70S ribosomes.

The protein localises to the cytoplasm. In terms of biological role, one of several proteins that assist in the late maturation steps of the functional core of the 30S ribosomal subunit. Associates with free 30S ribosomal subunits (but not with 30S subunits that are part of 70S ribosomes or polysomes). Required for efficient processing of 16S rRNA. May interact with the 5'-terminal helix region of 16S rRNA. This Azorhizobium caulinodans (strain ATCC 43989 / DSM 5975 / JCM 20966 / LMG 6465 / NBRC 14845 / NCIMB 13405 / ORS 571) protein is Ribosome-binding factor A.